The primary structure comprises 255 residues: 5'-methylthioadenosine/S-adenosylhomocysteine nucleosidase (255 aa).

Glu14 serves as the catalytic Proton acceptor. Substrate contacts are provided by residues Gly80, Leu176, and 196 to 197 (ME). Asp220 serves as the catalytic Proton donor.

The protein belongs to the PNP/UDP phosphorylase family. MtnN subfamily.

It catalyses the reaction S-adenosyl-L-homocysteine + H2O = S-(5-deoxy-D-ribos-5-yl)-L-homocysteine + adenine. The enzyme catalyses S-methyl-5'-thioadenosine + H2O = 5-(methylsulfanyl)-D-ribose + adenine. The catalysed reaction is 5'-deoxyadenosine + H2O = 5-deoxy-D-ribose + adenine. The protein operates within amino-acid biosynthesis; L-methionine biosynthesis via salvage pathway; S-methyl-5-thio-alpha-D-ribose 1-phosphate from S-methyl-5'-thioadenosine (hydrolase route): step 1/2. Functionally, catalyzes the irreversible cleavage of the glycosidic bond in both 5'-methylthioadenosine (MTA) and S-adenosylhomocysteine (SAH/AdoHcy) to adenine and the corresponding thioribose, 5'-methylthioribose and S-ribosylhomocysteine, respectively. Also cleaves 5'-deoxyadenosine, a toxic by-product of radical S-adenosylmethionine (SAM) enzymes, into 5-deoxyribose and adenine. This chain is 5'-methylthioadenosine/S-adenosylhomocysteine nucleosidase (mtnN), found in Mycobacterium bovis (strain ATCC BAA-935 / AF2122/97).